We begin with the raw amino-acid sequence, 282 residues long: HTH-type transcriptional activator RhaR (282 aa).

The HTH araC/xylS-type domain occupies 179–277; it reads DKLITALANS…GMTPSQWRHL (99 aa). 2 DNA-binding regions (H-T-H motif) span residues 196–217 and 244–267; these read DAFC…RAQT and VSEI…TRET.

In terms of assembly, binds DNA as a dimer.

It localises to the cytoplasm. Activates expression of the rhaSR operon in response to L-rhamnose. The chain is HTH-type transcriptional activator RhaR from Salmonella typhi.